We begin with the raw amino-acid sequence, 148 residues long: Transcriptional regulator MraZ (148 aa).

SpoVT-AbrB domains follow at residues Glu5–Glu53 and Ser82–Ala125.

This sequence belongs to the MraZ family. Forms oligomers.

The protein localises to the cytoplasm. It is found in the nucleoid. This chain is Transcriptional regulator MraZ, found in Xylella fastidiosa (strain Temecula1 / ATCC 700964).